Consider the following 834-residue polypeptide: ATP-dependent RNA helicase ddx23 (834 aa).

Disordered regions lie at residues 1 to 245 (MDPP…TQFS) and 322 to 371 (FGGY…GKQI). Residues 10-25 (SKRDTKKKDEVNKEQP) show a composition bias toward basic and acidic residues. Positions 42 to 54 (SNPTQEEPTNTLQ) are enriched in polar residues. 4 stretches are compositionally biased toward basic and acidic residues: residues 70 to 110 (GLKE…DYRD), 117 to 164 (GRDR…RRDG), 171 to 205 (RRRD…RDND), and 231 to 245 (DIHK…TQFS). Residues 328–362 (NNNNNGNHYNGNIYNNNNNNNNNNNNNNNINNNNN) show a composition bias toward low complexity. The short motif at 413–441 (RTWQESNLPREILEAIRQLGYEKPSPIQM) is the Q motif element. The region spanning 444–643 (IPISLTGRDI…KKYLRRPCTI (200 aa)) is the Helicase ATP-binding domain. Residue 457–464 (AETGSGKT) participates in ATP binding. The short motif at 570 to 573 (DEAD) is the DEAD box element. The Helicase C-terminal domain occupies 654 to 815 (RIRQTVIFVK…IVPIELLKHP (162 aa)). Residues 813 to 834 (KHPSSQQKHGSSKDHNKSVIFK) form a disordered region. Residues 823-834 (SSKDHNKSVIFK) show a composition bias toward basic and acidic residues.

The protein belongs to the DEAD box helicase family. DDX23/PRP28 subfamily.

Its subcellular location is the cytoplasm. It localises to the nucleus. It catalyses the reaction ATP + H2O = ADP + phosphate + H(+). Its function is as follows. Probable ATP-dependent RNA helicase which may be involved in mRNA splicing. In Dictyostelium discoideum (Social amoeba), this protein is ATP-dependent RNA helicase ddx23 (helB2).